The chain runs to 761 residues: MTLATRTVTLPGGLQATLVHQPQADRAAALARVAAGSHHEPSRFPGLAHLLEHLLFYGGERYQDDDRLMGWVQRQGGSVNATTLARHSAFFFEVAADALADGVARLQEMLQAPLLLREDIQREVAVIDAEYRLIQQHEPSRREAAVRHAASAPAAFRRFQVGSADALAGDLAALQAALGDFHRTHYVARRMQLWLQGPQSLEALGELAARFAAGLAAGEAPPPAPPLRLGEFTALQLAVSSQPALWRCPLIALSDNVTLLREFLLDEAPGSLMAGLRQRRLAGDVALNWLYQDRHLGWLALVFASDRPEEVDRQITHWLQALQQTTPEQQQHYYQLSRRRFQALSPLDQLRQRAFGFAPGAPPAGFADFCAALQVAPSVSLACQTVSPGEPVATQGFSLPLSRWRRRPESDPALAFAFYPQAAGDLVAKCPEKAAPLLHLPSPGDPPRLLLRPPFYCSPDQAEGLARGEQLRPLLAALRHAGGHGEWHLFDGSWQLTLQLPEPGRRPEAILQAILRQLALPVASLTPSPESIAIRHLMAQLPERLGTSGHQKGWLAALAGGSAEDAQWVARQLSLITAPVNPPMPAPAPCRRGVERLVYPGGDTALLVFIPLPDGASLAALRLLAQHCEPLFFQRLRVEQQIGYVVSCRYQRVADRDGLLMALQSPDRRAGELLRCGKDFLRQLAPMDEATFRPLQQRLAAQIRASRPPEARALSALRQEYGLPELTPQAVDALRVAEVADLAREMTRRRRRWQVLFTTGD.

His49 is a binding site for Zn(2+). Glu52 serves as the catalytic Proton acceptor. His53 and Glu130 together coordinate Zn(2+).

The protein belongs to the peptidase M16 family. The cofactor is Zn(2+).

The protein operates within cofactor biosynthesis; pyrroloquinoline quinone biosynthesis. Required for coenzyme pyrroloquinoline quinone (PQQ) biosynthesis. It is thought that this protein is a protease that cleaves peptides bond in a small peptide (gene pqqA), providing the glutamate and tyrosine residues which are necessary for the synthesis of PQQ. The polypeptide is Coenzyme PQQ synthesis protein F (pqqF) (Klebsiella pneumoniae).